A 561-amino-acid polypeptide reads, in one-letter code: Delta(24)-sterol reductase (561 aa).

Over 1 to 25 the chain is Lumenal; sequence MSDLQTPLVRPKRKKTWVDYFVKFR. S2 is subject to Phosphoserine. A helical; Signal-anchor transmembrane segment spans residues 26–46; sequence WIIVIFIVLPFSATFYFLIYL. The Cytoplasmic portion of the chain corresponds to 47 to 561; sequence GDMWSESKSF…HLETAYAEAD (515 aa). Residues 49-232 enclose the FAD-binding PCMH-type domain; it reads MWSESKSFEK…VAAEIRLIKV (184 aa). The tract at residues 518–539 is interaction with calmodulin; the sequence is CRKKYRAIGTFMSVYYKSKKGR.

This sequence belongs to the DIMINUTO family. In terms of assembly, interacts with calmodulin.

It is found in the microsome membrane. It carries out the reaction lathosterol + NADP(+) = 5alpha-cholesta-7,24-dien-3beta-ol + NADPH + H(+). Functionally, plays a critical role in the general process of plant cell elongation. Involved in the synthesis of campesterol, an early precursor of brassinolide. Required for the conversion of 24-methylenecholesterol to campesterol and for the conversion of isofucosterol to sitosterol. Necessary for both the isomerization and reduction of 24-methylenecholesterol. Regulates indirectly phytochrome-mediated light responses through the modulation of brassinosteroid biosynthesis. The sequence is that of Delta(24)-sterol reductase (DIM) from Arabidopsis thaliana (Mouse-ear cress).